The primary structure comprises 277 residues: Phosphate import ATP-binding protein PstB 2 (277 aa).

An ABC transporter domain is found at 31 to 272; sequence IEVPGLSLFY…PAKKQTEDYI (242 aa). Residue 63 to 70 coordinates ATP; it reads GPSGCGKS.

It belongs to the ABC transporter superfamily. Phosphate importer (TC 3.A.1.7) family. In terms of assembly, the complex is composed of two ATP-binding proteins (PstB), two transmembrane proteins (PstC and PstA) and a solute-binding protein (PstS).

It is found in the cell inner membrane. The enzyme catalyses phosphate(out) + ATP + H2O = ADP + 2 phosphate(in) + H(+). In terms of biological role, part of the ABC transporter complex PstSACB involved in phosphate import. Responsible for energy coupling to the transport system. The sequence is that of Phosphate import ATP-binding protein PstB 2 from Pseudomonas syringae pv. tomato (strain ATCC BAA-871 / DC3000).